The sequence spans 243 residues: 2-O-methyltransferase NoeI (243 aa).

The protein belongs to the FkbM methyltransferase family.

It is found in the cytoplasm. In terms of biological role, required for 2-O-methylation of the fucosyl group of Nod factors. The protein is 2-O-methyltransferase NoeI (noeI) of Sinorhizobium fredii (strain NBRC 101917 / NGR234).